The chain runs to 666 residues: Magnesium-chelatase 67 kDa subunit (666 aa).

37 to 44 (GRRGTGKT) is an ATP binding site. A disordered region spans residues 327-367 (LPDEEEQMQPPPPPPPPPPPPEPDKPDDPETPPDEAPKDEQ). The segment covering 335–347 (QPPPPPPPPPPPP) has biased composition (pro residues). Positions 475–661 (LIIFVVDASG…SLAETVKSGV (187 aa)) constitute a VWFA domain.

Belongs to the Mg-chelatase subunits D/I family.

It catalyses the reaction protoporphyrin IX + Mg(2+) + ATP + H2O = Mg-protoporphyrin IX + ADP + phosphate + 3 H(+). Its pathway is porphyrin-containing compound metabolism; bacteriochlorophyll biosynthesis. Functionally, involved in bacteriochlorophyll biosynthesis; introduces a magnesium ion into protoporphyrin IX to yield Mg-protoporphyrin IX. The chain is Magnesium-chelatase 67 kDa subunit (bchD) from Heliobacterium mobile (Heliobacillus mobilis).